The following is a 356-amino-acid chain: Heat-inducible transcription repressor HrcA (356 aa).

It belongs to the HrcA family.

In terms of biological role, negative regulator of class I heat shock genes (grpE-dnaK-dnaJ and groELS operons). Prevents heat-shock induction of these operons. This Bartonella tribocorum (strain CIP 105476 / IBS 506) protein is Heat-inducible transcription repressor HrcA.